The primary structure comprises 309 residues: NADH-cytochrome b5 reductase 1 (309 aa).

Residues 30-50 (FVPYAVAVTAILAGLKLFTGG) form a helical membrane-spanning segment. Positions 60 to 165 (TEFQEFVLKE…RGPKGAMVYT (106 aa)) constitute an FAD-binding FR-type domain. Residues 145-160 (TTLK…GPKG) and 171-208 (HIGM…KLDL) contribute to the FAD site.

Belongs to the flavoprotein pyridine nucleotide cytochrome reductase family. Monomer. Component of the 2-(3-amino-3-carboxypropyl)histidine synthase complex composed of dph1, dph2, dph3 and a NADH-dependent reductase, predominantly cbr1. The cofactor is FAD.

Its subcellular location is the mitochondrion outer membrane. It catalyses the reaction 2 Fe(III)-[cytochrome b5] + NADH = 2 Fe(II)-[cytochrome b5] + NAD(+) + H(+). The catalysed reaction is 2 Fe(3+)-[Dph3] + NADH = 2 Fe(2+)-[Dph3] + NAD(+) + H(+). It participates in protein modification; peptidyl-diphthamide biosynthesis. In terms of biological role, NADH-dependent reductase for dph3 and cytochrome b5. Required for the first step of diphthamide biosynthesis, a post-translational modification of histidine which occurs in elongation factor 2. Dph1 and dph2 transfer a 3-amino-3-carboxypropyl (ACP) group from S-adenosyl-L-methionine (SAM) to a histidine residue, the reaction is assisted by a reduction system comprising dph3 and a NADH-dependent reductase, predominantly cbr1. By reducing dph3, also involved in the formation of the tRNA wobble base modification mcm5s 2U (5-methoxycarbonylmethyl-2-thiouridine), mediated by the elongator complex. The cytochrome b5/NADH cytochrome b5 reductase electron transfer system supports the catalytic activity of several sterol biosynthetic enzymes. This is NADH-cytochrome b5 reductase 1 (cbr1) from Aspergillus fumigatus (strain ATCC MYA-4609 / CBS 101355 / FGSC A1100 / Af293) (Neosartorya fumigata).